Consider the following 262-residue polypeptide: Deaminated glutathione amidase (262 aa).

The region spanning 1-238 (MLVAAGQFAV…PALIMAEVTP (238 aa)) is the CN hydrolase domain. The Proton acceptor role is filled by Glu-40. Lys-110 acts as the Proton donor in catalysis. Cys-147 functions as the Nucleophile in the catalytic mechanism.

The protein belongs to the carbon-nitrogen hydrolase superfamily. NIT1/NIT2 family.

The catalysed reaction is N-(4-oxoglutaryl)-L-cysteinylglycine + H2O = L-cysteinylglycine + 2-oxoglutarate. In terms of biological role, hydrolyzes deaminated glutathione (dGSH) to 2-oxoglutarate and L-cysteinylglycine, and no activity on glutathione or L-glutamine. May function as a metabolite repair enzyme. This chain is Deaminated glutathione amidase (ybeM), found in Escherichia coli O157:H7.